The following is a 304-amino-acid chain: Sulfate adenylyltransferase subunit 2 1 (304 aa).

Belongs to the PAPS reductase family. CysD subfamily. As to quaternary structure, heterodimer composed of CysD, the smaller subunit, and CysN.

It catalyses the reaction sulfate + ATP + H(+) = adenosine 5'-phosphosulfate + diphosphate. It functions in the pathway sulfur metabolism; hydrogen sulfide biosynthesis; sulfite from sulfate: step 1/3. In terms of biological role, with CysN forms the ATP sulfurylase (ATPS) that catalyzes the adenylation of sulfate producing adenosine 5'-phosphosulfate (APS) and diphosphate, the first enzymatic step in sulfur assimilation pathway. APS synthesis involves the formation of a high-energy phosphoric-sulfuric acid anhydride bond driven by GTP hydrolysis by CysN coupled to ATP hydrolysis by CysD. The sequence is that of Sulfate adenylyltransferase subunit 2 1 from Marinobacter nauticus (strain ATCC 700491 / DSM 11845 / VT8) (Marinobacter aquaeolei).